Consider the following 367-residue polypeptide: Peroxidase 1 (367 aa).

A signal peptide spans 1–33 (MAKESKLTAGVAAALTVVAACALCLLLPATARA). Gln34 is modified (pyrrolidone carboxylic acid). Intrachain disulfides connect Cys44–Cys125, Cys77–Cys82, Cys131–Cys335, and Cys209–Cys244. His75 serves as the catalytic Proton acceptor. Positions 76, 79, 81, 83, and 85 each coordinate Ca(2+). Asn164 is a glycosylation site (N-linked (GlcNAc...) asparagine). Pro172 provides a ligand contact to substrate. Residue His202 coordinates heme b. Ca(2+) is bound at residue Thr203. N-linked (GlcNAc...) asparagine glycosylation is found at Asn218 and Asn247. Residues Asp259, Thr262, and Asp267 each coordinate Ca(2+). Asn303 is a glycosylation site (N-linked (GlcNAc...) asparagine).

Belongs to the peroxidase family. Classical plant (class III) peroxidase subfamily. It depends on heme b as a cofactor. Ca(2+) serves as cofactor. In terms of tissue distribution, expressed in the root tip meristems.

It is found in the secreted. Its subcellular location is the vacuole. It catalyses the reaction 2 a phenolic donor + H2O2 = 2 a phenolic radical donor + 2 H2O. In terms of biological role, removal of H(2)O(2), oxidation of toxic reductants, biosynthesis and degradation of lignin, suberization, auxin catabolism, response to environmental stresses such as wounding, pathogen attack and oxidative stress. These functions might be dependent on each isozyme/isoform in each plant tissue. The sequence is that of Peroxidase 1 (PER1) from Zea mays (Maize).